The following is a 311-amino-acid chain: Formimidoylglutamase (311 aa).

His122, Asp151, His153, Asp155, Cys242, and Asp244 together coordinate Mn(2+).

Belongs to the arginase family. Mn(2+) is required as a cofactor.

It carries out the reaction N-formimidoyl-L-glutamate + H2O = formamide + L-glutamate. The protein operates within amino-acid degradation; L-histidine degradation into L-glutamate; L-glutamate from N-formimidoyl-L-glutamate (hydrolase route): step 1/1. Catalyzes the conversion of N-formimidoyl-L-glutamate to L-glutamate and formamide. This Pseudomonas aeruginosa (strain UCBPP-PA14) protein is Formimidoylglutamase.